A 115-amino-acid polypeptide reads, in one-letter code: Kunitz-type trypsin inhibitor 1 (115 aa).

The protein belongs to the protease inhibitor I3 (leguminous Kunitz-type inhibitor) family.

Functionally, exhibits Kunitz trypsin protease inhibitor activity. This chain is Kunitz-type trypsin inhibitor 1, found in Selenicereus undatus (Pitahaya).